Here is a 345-residue protein sequence, read N- to C-terminus: Selenide, water dikinase (345 aa).

The active site involves Cys15. ATP contacts are provided by residues Lys18 and 46-48 (SKD). Asp49 contacts Mg(2+). Residues Asp66, Asp89, and 137 to 139 (GHS) each bind ATP. Asp89 serves as a coordination point for Mg(2+). Asp225 contacts Mg(2+).

Belongs to the selenophosphate synthase 1 family. Class I subfamily. Homodimer. It depends on Mg(2+) as a cofactor.

The catalysed reaction is hydrogenselenide + ATP + H2O = selenophosphate + AMP + phosphate + 2 H(+). Synthesizes selenophosphate from selenide and ATP. The polypeptide is Selenide, water dikinase (Aeromonas salmonicida (strain A449)).